The sequence spans 167 residues: GTP-dependent dephospho-CoA kinase (167 aa).

D39, V41, D58, K60, and E117 together coordinate GTP.

Belongs to the GTP-dependent DPCK family.

It carries out the reaction 3'-dephospho-CoA + GTP = GDP + CoA + H(+). It participates in cofactor biosynthesis; coenzyme A biosynthesis. Functionally, catalyzes the GTP-dependent phosphorylation of the 3'-hydroxyl group of dephosphocoenzyme A to form coenzyme A (CoA). This Korarchaeum cryptofilum (strain OPF8) protein is GTP-dependent dephospho-CoA kinase.